The chain runs to 29 residues: Cytochrome b6-f complex subunit 8 (29 aa).

Residues 3-23 (IVNIAWAALMVVSTFSLTLVV) form a helical membrane-spanning segment.

It belongs to the PetN family. In terms of assembly, the 4 large subunits of the cytochrome b6-f complex are cytochrome b6, subunit IV (17 kDa polypeptide, PetD), cytochrome f and the Rieske protein, while the 4 small subunits are PetG, PetL, PetM and PetN. The complex functions as a dimer.

The protein resides in the plastid. It is found in the chloroplast thylakoid membrane. Functionally, component of the cytochrome b6-f complex, which mediates electron transfer between photosystem II (PSII) and photosystem I (PSI), cyclic electron flow around PSI, and state transitions. This Huperzia lucidula (Shining clubmoss) protein is Cytochrome b6-f complex subunit 8.